A 295-amino-acid polypeptide reads, in one-letter code: Septu protein PtuB (295 aa).

Its function is as follows. Component of antiviral defense system Septu type II, composed of PtuA and PtuB. Expression of Septu type II in B.subtilis (strain BEST7003) confers resistance to phages SBSphiC and SpBeta. May be a nuclease. The protein is Septu protein PtuB of Bacillus mycoides (strain KBAB4) (Bacillus weihenstephanensis).